The sequence spans 81 residues: ATP synthase subunit c, chloroplastic (81 aa).

Helical transmembrane passes span 7 to 27 (AASVIAAGLAVGLASIGPGVG) and 57 to 77 (LAFMEALTIYGLVVALALLFA).

Belongs to the ATPase C chain family. F-type ATPases have 2 components, F(1) - the catalytic core - and F(0) - the membrane proton channel. F(1) has five subunits: alpha(3), beta(3), gamma(1), delta(1), epsilon(1). F(0) has four main subunits: a(1), b(1), b'(1) and c(10-14). The alpha and beta chains form an alternating ring which encloses part of the gamma chain. F(1) is attached to F(0) by a central stalk formed by the gamma and epsilon chains, while a peripheral stalk is formed by the delta, b and b' chains.

The protein resides in the plastid. It localises to the chloroplast thylakoid membrane. Functionally, f(1)F(0) ATP synthase produces ATP from ADP in the presence of a proton or sodium gradient. F-type ATPases consist of two structural domains, F(1) containing the extramembraneous catalytic core and F(0) containing the membrane proton channel, linked together by a central stalk and a peripheral stalk. During catalysis, ATP synthesis in the catalytic domain of F(1) is coupled via a rotary mechanism of the central stalk subunits to proton translocation. In terms of biological role, key component of the F(0) channel; it plays a direct role in translocation across the membrane. A homomeric c-ring of between 10-14 subunits forms the central stalk rotor element with the F(1) delta and epsilon subunits. This is ATP synthase subunit c, chloroplastic from Arabis hirsuta (Hairy rock-cress).